The sequence spans 124 residues: uncharacterized protein (124 aa).

Disordered stretches follow at residues Met1–Pro31 and Glu59–Pro124. 2 stretches are compositionally biased toward polar residues: residues Gly65–Ala86 and Thr98–Pro124.

This is an uncharacterized protein from Bos taurus (Bovine).